The following is a 348-amino-acid chain: GTP 3',8-cyclase (348 aa).

In terms of domain architecture, Radical SAM core spans 24–242 (PFGRAVTYLR…EKQFTLTDID (219 aa)). Residue R33 coordinates GTP. 2 residues coordinate [4Fe-4S] cluster: C40 and C44. Y46 is a binding site for S-adenosyl-L-methionine. Residue C47 coordinates [4Fe-4S] cluster. Position 82 (R82) interacts with GTP. An S-adenosyl-L-methionine-binding site is contributed by G86. T115 lines the GTP pocket. Residue S139 participates in S-adenosyl-L-methionine binding. K175 lines the GTP pocket. S-adenosyl-L-methionine is bound at residue M209. Residues C272 and C275 each contribute to the [4Fe-4S] cluster site. GTP is bound at residue 277–279 (RVR). C289 contacts [4Fe-4S] cluster.

Belongs to the radical SAM superfamily. MoaA family. In terms of assembly, monomer and homodimer. It depends on [4Fe-4S] cluster as a cofactor.

The catalysed reaction is GTP + AH2 + S-adenosyl-L-methionine = (8S)-3',8-cyclo-7,8-dihydroguanosine 5'-triphosphate + 5'-deoxyadenosine + L-methionine + A + H(+). It functions in the pathway cofactor biosynthesis; molybdopterin biosynthesis. Functionally, catalyzes the cyclization of GTP to (8S)-3',8-cyclo-7,8-dihydroguanosine 5'-triphosphate. In Rhizobium etli (strain CIAT 652), this protein is GTP 3',8-cyclase.